The chain runs to 333 residues: Low specificity L-threonine aldolase (333 aa).

K197 carries the post-translational modification N6-(pyridoxal phosphate)lysine.

The protein belongs to the threonine aldolase family. In terms of assembly, homotetramer. It depends on pyridoxal 5'-phosphate as a cofactor.

The enzyme catalyses L-threonine = acetaldehyde + glycine. It carries out the reaction L-allo-threonine = acetaldehyde + glycine. In terms of biological role, catalyzes the cleavage of L-allo-threonine and L-threonine to glycine and acetaldehyde. L-threo-phenylserine and L-erythro-phenylserine are also good substrates. This is Low specificity L-threonine aldolase (ltaE) from Escherichia coli O157:H7.